We begin with the raw amino-acid sequence, 158 residues long: UPF0178 protein Rpal_2485 (158 aa).

The protein belongs to the UPF0178 family.

This Rhodopseudomonas palustris (strain TIE-1) protein is UPF0178 protein Rpal_2485.